Reading from the N-terminus, the 218-residue chain is Large ribosomal subunit protein uL3 (218 aa).

The protein belongs to the universal ribosomal protein uL3 family. Part of the 50S ribosomal subunit. Forms a cluster with proteins L14 and L19.

One of the primary rRNA binding proteins, it binds directly near the 3'-end of the 23S rRNA, where it nucleates assembly of the 50S subunit. The sequence is that of Large ribosomal subunit protein uL3 from Brachyspira pilosicoli (Serpulina pilosicoli).